Here is a 198-residue protein sequence, read N- to C-terminus: Nucleoid occlusion factor SlmA (198 aa).

An HTH tetR-type domain is found at 9-70; it reads RNRREEILQA…SLIEFIEDTL (62 aa). The H-T-H motif DNA-binding region spans 33 to 52; sequence TTAKLAANVGVSEAALYRHF. Positions 117–144 form a coiled coil; the sequence is EQDRLQGRINQLFERIEAQLRQVLKERR.

This sequence belongs to the nucleoid occlusion factor SlmA family. In terms of assembly, homodimer. Interacts with FtsZ.

The protein localises to the cytoplasm. Its subcellular location is the nucleoid. Functionally, required for nucleoid occlusion (NO) phenomenon, which prevents Z-ring formation and cell division over the nucleoid. Acts as a DNA-associated cell division inhibitor that binds simultaneously chromosomal DNA and FtsZ, and disrupts the assembly of FtsZ polymers. SlmA-DNA-binding sequences (SBS) are dispersed on non-Ter regions of the chromosome, preventing FtsZ polymerization at these regions. The polypeptide is Nucleoid occlusion factor SlmA (Edwardsiella ictaluri (strain 93-146)).